Here is a 99-residue protein sequence, read N- to C-terminus: Biogenesis of lysosome-related organelles complex 1 subunit SNN1 (99 aa).

Residues 34 to 94 (SINELRESQA…VVLKRYEKMV (61 aa)) are a coiled coil.

It belongs to the SNAPIN family. As to quaternary structure, component of the biogenesis of lysosome-related organelles complex-1 (BLOC-1).

It is found in the endosome. Its function is as follows. Component of the biogenesis of lysosome-related organelles complex-1 (BLOC-1), a complex involved in endosomal cargo sorting. This Kluyveromyces lactis (strain ATCC 8585 / CBS 2359 / DSM 70799 / NBRC 1267 / NRRL Y-1140 / WM37) (Yeast) protein is Biogenesis of lysosome-related organelles complex 1 subunit SNN1 (SNN1).